The sequence spans 320 residues: Biotin synthase (320 aa).

The Radical SAM core domain maps to Gly-43 to Arg-270. The [4Fe-4S] cluster site is built by Cys-58, Cys-62, and Cys-65. The [2Fe-2S] cluster site is built by Cys-102, Cys-133, Cys-193, and Arg-265.

This sequence belongs to the radical SAM superfamily. Biotin synthase family. As to quaternary structure, homodimer. The cofactor is [4Fe-4S] cluster. It depends on [2Fe-2S] cluster as a cofactor.

It catalyses the reaction (4R,5S)-dethiobiotin + (sulfur carrier)-SH + 2 reduced [2Fe-2S]-[ferredoxin] + 2 S-adenosyl-L-methionine = (sulfur carrier)-H + biotin + 2 5'-deoxyadenosine + 2 L-methionine + 2 oxidized [2Fe-2S]-[ferredoxin]. It participates in cofactor biosynthesis; biotin biosynthesis; biotin from 7,8-diaminononanoate: step 2/2. Its function is as follows. Catalyzes the conversion of dethiobiotin (DTB) to biotin by the insertion of a sulfur atom into dethiobiotin via a radical-based mechanism. In Hyphomonas neptunium (strain ATCC 15444), this protein is Biotin synthase.